The chain runs to 388 residues: L-arabinitol 4-dehydrogenase (388 aa).

Residues Cys55, His80, Glu81, Cys110, Cys113, Cys116, Cys124, and Glu165 each contribute to the Zn(2+) site. Residues 192–193, Asp213, Arg218, Ile293, and 317–319 contribute to the NAD(+) site; these read PI and QYR.

It belongs to the zinc-containing alcohol dehydrogenase family. Homotetramer. Zn(2+) is required as a cofactor.

The catalysed reaction is L-arabinitol + NAD(+) = L-xylulose + NADH + H(+). It functions in the pathway carbohydrate degradation; L-arabinose degradation via L-arabinitol; D-xylulose 5-phosphate from L-arabinose (fungal route): step 2/5. In terms of biological role, catalyzes the NAD-dependent oxidation of L-arabinitol to L-xylulose in the fungal L-arabinose catabolic pathway. L-arabinose catabolism is important for using plant material as a carbon source. NADP cannot act as a cosubstrate. This chain is L-arabinitol 4-dehydrogenase (lad), found in Talaromyces emersonii (Thermophilic fungus).